Reading from the N-terminus, the 392-residue chain is Phospho-N-acetylmuramoyl-pentapeptide-transferase (392 aa).

10 consecutive transmembrane segments (helical) span residues Ala-29–Arg-49, Thr-76–Leu-96, Phe-100–Trp-120, Tyr-137–Glu-157, Ile-193–Ser-213, Gly-225–Thr-245, Ser-262–Phe-282, Val-289–Ile-309, Ile-314–Val-334, and Gln-369–Leu-389.

Belongs to the glycosyltransferase 4 family. MraY subfamily. It depends on Mg(2+) as a cofactor.

The protein resides in the cell inner membrane. The enzyme catalyses UDP-N-acetyl-alpha-D-muramoyl-L-alanyl-gamma-D-glutamyl-meso-2,6-diaminopimeloyl-D-alanyl-D-alanine + di-trans,octa-cis-undecaprenyl phosphate = di-trans,octa-cis-undecaprenyl diphospho-N-acetyl-alpha-D-muramoyl-L-alanyl-D-glutamyl-meso-2,6-diaminopimeloyl-D-alanyl-D-alanine + UMP. It functions in the pathway cell wall biogenesis; peptidoglycan biosynthesis. Its function is as follows. Catalyzes the initial step of the lipid cycle reactions in the biosynthesis of the cell wall peptidoglycan: transfers peptidoglycan precursor phospho-MurNAc-pentapeptide from UDP-MurNAc-pentapeptide onto the lipid carrier undecaprenyl phosphate, yielding undecaprenyl-pyrophosphoryl-MurNAc-pentapeptide, known as lipid I. The protein is Phospho-N-acetylmuramoyl-pentapeptide-transferase of Polaromonas sp. (strain JS666 / ATCC BAA-500).